The sequence spans 476 residues: Bifunctional protein GlmU (476 aa).

Residues 1 to 235 (MTALDIIIMA…ALQVAGVNSP (235 aa)) form a pyrophosphorylase region. Residues lysine 23, glutamine 81, 86 to 87 (GT), 108 to 110 (SGD), glycine 145, glutamate 160, and asparagine 233 each bind UDP-N-acetyl-alpha-D-glucosamine. Aspartate 110 is a Mg(2+) binding site. Residue asparagine 233 participates in Mg(2+) binding. The interval 236–256 (AQLAELERAHQRAQAAALMEQ) is linker. The interval 257–476 (GVRLADPARF…WKRPAKQAKG (220 aa)) is N-acetyltransferase. UDP-N-acetyl-alpha-D-glucosamine is bound by residues arginine 351 and lysine 369. The Proton acceptor role is filled by histidine 381. Residues tyrosine 384 and asparagine 395 each coordinate UDP-N-acetyl-alpha-D-glucosamine. Residues alanine 398, 404 to 405 (NY), serine 423, glycine 441, and arginine 458 contribute to the acetyl-CoA site.

The protein in the N-terminal section; belongs to the N-acetylglucosamine-1-phosphate uridyltransferase family. In the C-terminal section; belongs to the transferase hexapeptide repeat family. In terms of assembly, homotrimer. Requires Mg(2+) as cofactor.

Its subcellular location is the cytoplasm. The catalysed reaction is alpha-D-glucosamine 1-phosphate + acetyl-CoA = N-acetyl-alpha-D-glucosamine 1-phosphate + CoA + H(+). The enzyme catalyses N-acetyl-alpha-D-glucosamine 1-phosphate + UTP + H(+) = UDP-N-acetyl-alpha-D-glucosamine + diphosphate. Its pathway is nucleotide-sugar biosynthesis; UDP-N-acetyl-alpha-D-glucosamine biosynthesis; N-acetyl-alpha-D-glucosamine 1-phosphate from alpha-D-glucosamine 6-phosphate (route II): step 2/2. It functions in the pathway nucleotide-sugar biosynthesis; UDP-N-acetyl-alpha-D-glucosamine biosynthesis; UDP-N-acetyl-alpha-D-glucosamine from N-acetyl-alpha-D-glucosamine 1-phosphate: step 1/1. The protein operates within bacterial outer membrane biogenesis; LPS lipid A biosynthesis. Functionally, catalyzes the last two sequential reactions in the de novo biosynthetic pathway for UDP-N-acetylglucosamine (UDP-GlcNAc). The C-terminal domain catalyzes the transfer of acetyl group from acetyl coenzyme A to glucosamine-1-phosphate (GlcN-1-P) to produce N-acetylglucosamine-1-phosphate (GlcNAc-1-P), which is converted into UDP-GlcNAc by the transfer of uridine 5-monophosphate (from uridine 5-triphosphate), a reaction catalyzed by the N-terminal domain. This is Bifunctional protein GlmU from Acidovorax ebreus (strain TPSY) (Diaphorobacter sp. (strain TPSY)).